The sequence spans 340 residues: Guanine nucleotide-binding protein G(I)/G(S)/G(T) subunit beta-1 (340 aa).

N-acetylserine is present on Ser-2. Ser-2 carries the post-translational modification Phosphoserine. 7 WD repeats span residues 46–94, 95–140, 141–181, 182–223, 224–267, 268–309, and 310–340; these read RTRR…HAIP, LRSS…RELA, GHTG…TTFT, GHTG…QTFT, GHES…YSHD, NIIC…GVLA, and GHDN…KIWN. Position 266 is a phosphohistidine (His-266).

The protein belongs to the WD repeat G protein beta family. As to quaternary structure, g proteins are composed of 3 units, alpha, beta and gamma. The heterodimer formed by GNB1 and GNG2 interacts with ARHGEF5. The heterodimer formed by GNB1 and GNG2 interacts with GRK2. Forms a complex with GNAO1 and GNG3. Interacts with ARHGEF18 and RASD2. Forms complexes with TAS2R14 and G-proteins; these complexes play a role in the perception of bitterness. Component of the TAS2R14-GNAI1 complex, consisting of TAS2R14, GNAI1, GNB1 and GNG2. Component of the TAS2R14-GNAT3 complex, consisting of TAS2R14, GNAT3, GNB1 and GNG2. Component of the TAS2R14-GNAS2 complex, consisting of TAS2R14, GNAS2, GNB1 and GNG2. Phosphorylation at His-266 by NDKB contributes to G protein activation by increasing the high energetic phosphate transfer onto GDP.

Functionally, guanine nucleotide-binding proteins (G proteins) are involved as a modulator or transducer in various transmembrane signaling systems. The beta and gamma chains are required for the GTPase activity, for replacement of GDP by GTP, and for G protein-effector interaction. In Cricetulus griseus (Chinese hamster), this protein is Guanine nucleotide-binding protein G(I)/G(S)/G(T) subunit beta-1 (GNB1).